Consider the following 348-residue polypeptide: Rhodopsin (348 aa).

Methionine 1 carries the N-acetylmethionine modification. The Extracellular segment spans residues 1-36 (MNGTEGPNFYVPFSNKTGVVRSPFEYPQYYLAEPWQ). N-linked (GlcNAc...) asparagine glycans are attached at residues asparagine 2 and asparagine 15. A helical transmembrane segment spans residues 37 to 61 (FSMLAAYMFLLIVLGFPINFLTLYV). Residues 62–73 (TVQHKKLRTPLN) lie on the Cytoplasmic side of the membrane. A helical membrane pass occupies residues 74–96 (YILLNLAVADLFMVFGGFTTTLY). At 97–110 (TSLHGYFVFGPTGC) the chain is on the extracellular side. Cysteine 110 and cysteine 187 are oxidised to a cystine. A helical transmembrane segment spans residues 111–133 (NLEGFFATLGGEIALWSLVVLAI). The 'Ionic lock' involved in activated form stabilization signature appears at 134 to 136 (ERY). Residues 134-152 (ERYVVVCKPMSNFRFGENH) lie on the Cytoplasmic side of the membrane. The chain crosses the membrane as a helical span at residues 153–173 (AIMGVGLTWVMALACAAPPLV). The Extracellular segment spans residues 174-202 (GWSRYIPEGMQCSCGIDYYTLKPEVNNES). Glutamate 201 is a Zn(2+) binding site. Residues 203-224 (FVIYMFVVHFTIPMIVIFFCYG) traverse the membrane as a helical segment. Residues 225–252 (QLVFTVKEAAAQQQESATTQKAEKEVTR) are Cytoplasmic-facing. Residues 253 to 274 (MVIIMVIAFLICWVPYASVAFY) form a helical membrane-spanning segment. The Extracellular portion of the chain corresponds to 275–286 (IFTHQGFNFGPI). Glutamine 279 lines the Zn(2+) pocket. Residues 287–308 (FMTLPAFFAKAAAIYNPVIYIM) traverse the membrane as a helical segment. Position 296 is an N6-(retinylidene)lysine (lysine 296). The Cytoplasmic segment spans residues 309–348 (MNKQFRTCMITTLCCGKNPLGDDEVSASASKTETSQVAPA). Residues cysteine 322 and cysteine 323 are each lipidated (S-palmitoyl cysteine). Residues 330 to 348 (DDEVSASASKTETSQVAPA) are interaction with SAG. Residues serine 334 and serine 338 each carry the phosphoserine modification. Phosphothreonine is present on residues threonine 340 and threonine 342. The residue at position 343 (serine 343) is a Phosphoserine.

It belongs to the G-protein coupled receptor 1 family. Opsin subfamily. In terms of assembly, homodimer. Interacts (phosphorylated form) with SAG. Interacts with GNAT1. Interacts with GNAT3. SAG and G-proteins compete for a common binding site. Interacts with GRK1. Interacts with PRCD; the interaction promotes PRCD stability. Forms a complex with ASAP1 and ARF4. Forms a complex with ASAP1, RAB11A, Rabin8/RAB3IP, ARF4 and RAB11FIP3; the complex regulates Golgi-to-cilia rhodopsin/RHO transport in photoreceptors. Post-translationally, phosphorylated on some or all of the serine and threonine residues present in the C-terminal region. In terms of processing, contains one covalently linked retinal chromophore. Upon light absorption, the covalently bound 11-cis-retinal is converted to all-trans-retinal. After hydrolysis of the Schiff base and release of the covalently bound all-trans-retinal, active rhodopsin is regenerated by binding of a fresh molecule of 11-cis-retinal.

It is found in the membrane. Its subcellular location is the cell projection. The protein localises to the cilium. It localises to the photoreceptor outer segment. Functionally, photoreceptor required for image-forming vision at low light intensity. Required for photoreceptor cell viability after birth. Light-induced isomerization of 11-cis to all-trans retinal triggers a conformational change that activates signaling via G-proteins. Subsequent receptor phosphorylation mediates displacement of the bound G-protein alpha subunit by the arrestin SAG and terminates signaling. In Pagophilus groenlandicus (Harp seal), this protein is Rhodopsin (RHO).